The sequence spans 225 residues: NAD(P)H-quinone oxidoreductase subunit K, chloroplastic (225 aa).

The [4Fe-4S] cluster site is built by C43, C44, C108, and C139.

Belongs to the complex I 20 kDa subunit family. In terms of assembly, NDH is composed of at least 16 different subunits, 5 of which are encoded in the nucleus. It depends on [4Fe-4S] cluster as a cofactor.

The protein resides in the plastid. It localises to the chloroplast thylakoid membrane. It catalyses the reaction a plastoquinone + NADH + (n+1) H(+)(in) = a plastoquinol + NAD(+) + n H(+)(out). The enzyme catalyses a plastoquinone + NADPH + (n+1) H(+)(in) = a plastoquinol + NADP(+) + n H(+)(out). NDH shuttles electrons from NAD(P)H:plastoquinone, via FMN and iron-sulfur (Fe-S) centers, to quinones in the photosynthetic chain and possibly in a chloroplast respiratory chain. The immediate electron acceptor for the enzyme in this species is believed to be plastoquinone. Couples the redox reaction to proton translocation, and thus conserves the redox energy in a proton gradient. In Lepidium virginicum (Virginia pepperweed), this protein is NAD(P)H-quinone oxidoreductase subunit K, chloroplastic.